Consider the following 369-residue polypeptide: Flagellar P-ring protein (369 aa).

A signal peptide spans M1–A22.

This sequence belongs to the FlgI family. In terms of assembly, the basal body constitutes a major portion of the flagellar organelle and consists of four rings (L,P,S, and M) mounted on a central rod.

The protein localises to the periplasm. The protein resides in the bacterial flagellum basal body. Functionally, assembles around the rod to form the L-ring and probably protects the motor/basal body from shearing forces during rotation. This chain is Flagellar P-ring protein, found in Pseudomonas savastanoi pv. phaseolicola (strain 1448A / Race 6) (Pseudomonas syringae pv. phaseolicola (strain 1448A / Race 6)).